A 206-amino-acid polypeptide reads, in one-letter code: Cytochrome b6-f complex iron-sulfur subunit, chloroplastic (206 aa).

The transit peptide at 1 to 29 (MAMITSRRAAAPCKAQATRRSRVMSVVRA) directs the protein to the chloroplast. Residues 48–68 (ILLGGASLPVGSLALGYGAFF) form a helical membrane-spanning segment. A Rieske domain is found at 92-188 (ANAWLATHQK…CDVQEDGLVT (97 aa)). [2Fe-2S] cluster-binding residues include Cys134, His136, Cys152, and His155. Cys139 and Cys154 are oxidised to a cystine.

The protein belongs to the Rieske iron-sulfur protein family. As to quaternary structure, the 4 large subunits of the cytochrome b6-f complex are cytochrome b6, subunit IV (17 kDa polypeptide, petD), cytochrome f and the Rieske protein, while the 4 small subunits are petG, petL, petM and petN. The complex functions as a dimer. [2Fe-2S] cluster is required as a cofactor.

Its subcellular location is the plastid. It localises to the chloroplast thylakoid membrane. It catalyses the reaction 2 oxidized [plastocyanin] + a plastoquinol + 2 H(+)(in) = 2 reduced [plastocyanin] + a plastoquinone + 4 H(+)(out). In terms of biological role, component of the cytochrome b6-f complex, which mediates electron transfer between photosystem II (PSII) and photosystem I (PSI), cyclic electron flow around PSI, and state transitions. This chain is Cytochrome b6-f complex iron-sulfur subunit, chloroplastic (petC), found in Volvox carteri (Green alga).